The chain runs to 188 residues: GMP synthase [glutamine-hydrolyzing] subunit A (188 aa).

One can recognise a Glutamine amidotransferase type-1 domain in the interval 2 to 188 (KIAVIYFGGQ…FKNFIEACKK (187 aa)). Residue Cys-79 is the Nucleophile of the active site. Catalysis depends on residues His-166 and Glu-168.

In terms of assembly, heterodimer composed of a glutamine amidotransferase subunit (A) and a GMP-binding subunit (B).

It catalyses the reaction XMP + L-glutamine + ATP + H2O = GMP + L-glutamate + AMP + diphosphate + 2 H(+). Its pathway is purine metabolism; GMP biosynthesis; GMP from XMP (L-Gln route): step 1/1. Catalyzes the synthesis of GMP from XMP. This chain is GMP synthase [glutamine-hydrolyzing] subunit A, found in Sulfurisphaera tokodaii (strain DSM 16993 / JCM 10545 / NBRC 100140 / 7) (Sulfolobus tokodaii).